The chain runs to 66 residues: Nigrocin-2GRa (66 aa).

An N-terminal signal peptide occupies residues 1-22 (MFTLKKSQLLLFFPGTINLSLC). Positions 23 to 45 (QDETNAEEERRDEEVAKMEEIKR) are excised as a propeptide. Residues Cys-60 and Cys-66 are joined by a disulfide bond.

In terms of tissue distribution, expressed by the skin glands.

It localises to the secreted. Antimicrobial peptide active at least against the Gram-positive bacterium S.aureus but with otherwise unclear activity spectrum. Lacks hemolytic activity against rabbit or human erythrocytes. The polypeptide is Nigrocin-2GRa (Odorrana grahami (Yunnanfu frog)).